Here is a 233-residue protein sequence, read N- to C-terminus: tRNA pseudouridine synthase B (233 aa).

D48 functions as the Nucleophile in the catalytic mechanism.

It belongs to the pseudouridine synthase TruB family. Type 1 subfamily.

The catalysed reaction is uridine(55) in tRNA = pseudouridine(55) in tRNA. Its function is as follows. Responsible for synthesis of pseudouridine from uracil-55 in the psi GC loop of transfer RNAs. This is tRNA pseudouridine synthase B from Bacteroides fragilis (strain ATCC 25285 / DSM 2151 / CCUG 4856 / JCM 11019 / LMG 10263 / NCTC 9343 / Onslow / VPI 2553 / EN-2).